The following is a 325-amino-acid chain: Tetraacyldisaccharide 4'-kinase (325 aa).

Position 55-62 (55-62) interacts with ATP; it reads TAGGNGKT.

This sequence belongs to the LpxK family.

The enzyme catalyses a lipid A disaccharide + ATP = a lipid IVA + ADP + H(+). Its pathway is glycolipid biosynthesis; lipid IV(A) biosynthesis; lipid IV(A) from (3R)-3-hydroxytetradecanoyl-[acyl-carrier-protein] and UDP-N-acetyl-alpha-D-glucosamine: step 6/6. In terms of biological role, transfers the gamma-phosphate of ATP to the 4'-position of a tetraacyldisaccharide 1-phosphate intermediate (termed DS-1-P) to form tetraacyldisaccharide 1,4'-bis-phosphate (lipid IVA). The chain is Tetraacyldisaccharide 4'-kinase from Salmonella arizonae (strain ATCC BAA-731 / CDC346-86 / RSK2980).